The primary structure comprises 280 residues: Diaminopimelate epimerase (280 aa).

Residues asparagine 12, glutamine 45, and asparagine 65 each coordinate substrate. Cysteine 74 (proton donor) is an active-site residue. Residues 75–76 (GN), asparagine 163, asparagine 196, and 214–215 (ER) contribute to the substrate site. Catalysis depends on cysteine 223, which acts as the Proton acceptor. 224–225 (GT) is a binding site for substrate.

This sequence belongs to the diaminopimelate epimerase family. As to quaternary structure, homodimer.

The protein resides in the cytoplasm. The catalysed reaction is (2S,6S)-2,6-diaminopimelate = meso-2,6-diaminopimelate. Its pathway is amino-acid biosynthesis; L-lysine biosynthesis via DAP pathway; DL-2,6-diaminopimelate from LL-2,6-diaminopimelate: step 1/1. In terms of biological role, catalyzes the stereoinversion of LL-2,6-diaminopimelate (L,L-DAP) to meso-diaminopimelate (meso-DAP), a precursor of L-lysine and an essential component of the bacterial peptidoglycan. The chain is Diaminopimelate epimerase from Shewanella sediminis (strain HAW-EB3).